A 353-amino-acid polypeptide reads, in one-letter code: Cellulose-complementing protein (353 aa).

3 disordered regions span residues 1–21 (MSAS…PQDF), 75–94 (PQIA…PAIV), and 117–337 (AVPA…SPRP). Residues 80-91 (APPPPPVVPDPP) are compositionally biased toward pro residues. Composition is skewed to low complexity over residues 117-132 (AVPA…VQAA) and 142-164 (IAEQ…VAAA). Positions 165–175 (PVPPDPAPVTP) are enriched in pro residues. Polar residues-rich tracts occupy residues 196 to 226 (QVRT…SSIS) and 278 to 304 (STRS…QASR).

In Komagataeibacter xylinus (Gluconacetobacter xylinus), this protein is Cellulose-complementing protein (ccpAX).